The chain runs to 1396 residues: DNA-directed RNA polymerase subunit beta' (1396 aa).

Zn(2+) contacts are provided by C70, C72, C85, and C88. Mg(2+) is bound by residues D460, D462, and D464. Zn(2+) is bound by residues C807, C881, C888, and C891. Acidic residues predominate over residues 1361-1378; the sequence is EPEEIEEPVPEDLEDETA. The interval 1361–1396 is disordered; it reads EPEEIEEPVPEDLEDETAGADSAQAASEESVAEGKD. The segment covering 1379-1389 has biased composition (low complexity); sequence GADSAQAASEE.

This sequence belongs to the RNA polymerase beta' chain family. As to quaternary structure, the RNAP catalytic core consists of 2 alpha, 1 beta, 1 beta' and 1 omega subunit. When a sigma factor is associated with the core the holoenzyme is formed, which can initiate transcription. Mg(2+) is required as a cofactor. The cofactor is Zn(2+).

It carries out the reaction RNA(n) + a ribonucleoside 5'-triphosphate = RNA(n+1) + diphosphate. Functionally, DNA-dependent RNA polymerase catalyzes the transcription of DNA into RNA using the four ribonucleoside triphosphates as substrates. This is DNA-directed RNA polymerase subunit beta' from Syntrophotalea carbinolica (strain DSM 2380 / NBRC 103641 / GraBd1) (Pelobacter carbinolicus).